A 145-amino-acid chain; its full sequence is Actin-depolymerizing factor 11 (145 aa).

Residues 11–145 (SSGIGVAAEC…DIELLRERAH (135 aa)) form the ADF-H domain.

The protein belongs to the actin-binding proteins ADF family.

Its function is as follows. Actin-depolymerizing protein. Severs actin filaments (F-actin) and binds to actin monomers. The chain is Actin-depolymerizing factor 11 (ADF11) from Oryza sativa subsp. japonica (Rice).